A 354-amino-acid chain; its full sequence is Ribosomal RNA large subunit methyltransferase M (354 aa).

Residues serine 183, 216 to 219, aspartate 235, aspartate 255, and aspartate 271 contribute to the S-adenosyl-L-methionine site; that span reads SPGG. Catalysis depends on lysine 300, which acts as the Proton acceptor.

This sequence belongs to the class I-like SAM-binding methyltransferase superfamily. RNA methyltransferase RlmE family. RlmM subfamily. Monomer.

It is found in the cytoplasm. It catalyses the reaction cytidine(2498) in 23S rRNA + S-adenosyl-L-methionine = 2'-O-methylcytidine(2498) in 23S rRNA + S-adenosyl-L-homocysteine + H(+). In terms of biological role, catalyzes the 2'-O-methylation at nucleotide C2498 in 23S rRNA. This chain is Ribosomal RNA large subunit methyltransferase M, found in Pseudomonas entomophila (strain L48).